The following is a 403-amino-acid chain: Phosphoglycerate kinase (403 aa).

Substrate-binding positions include 21 to 23 (DFN), Arg-36, 59 to 62 (HLGR), Arg-119, and Arg-154. Residues Lys-207, Gly-299, Glu-330, and 357-360 (GGDA) each bind ATP.

It belongs to the phosphoglycerate kinase family. In terms of assembly, monomer.

It localises to the cytoplasm. The enzyme catalyses (2R)-3-phosphoglycerate + ATP = (2R)-3-phospho-glyceroyl phosphate + ADP. It functions in the pathway carbohydrate degradation; glycolysis; pyruvate from D-glyceraldehyde 3-phosphate: step 2/5. This is Phosphoglycerate kinase (pgk) from Chlamydia muridarum (strain MoPn / Nigg).